Consider the following 419-residue polypeptide: Transcription factor IIIB 50 kDa subunit (419 aa).

A TFIIB-type zinc finger spans residues 2–36; the sequence is PGRGRCPDCGSTELVEDSHYSQSQLVCSDCGCVVT. Zn(2+) is bound by residues Cys7, Cys10, Cys28, and Cys31. Repeat copies occupy residues 72 to 157 and 173 to 249. The tract at residues 108–114 is interaction with target DNA; it reads AARLQKK. The span at 314-326 shows a compositional bias: basic and acidic residues; it reads DGTAEVETREKEP. The segment at 314-351 is disordered; the sequence is DGTAEVETREKEPPGWGQGQGEGEVGNNSLGLPQGKRP. Ser353 carries the phosphoserine modification. Residues 357 to 363 are required for the formation of a ternary complex with DNA and TBP; not required for interaction with TBP in the absence of DNA; that stretch reads LLPPCML. Cys361 is modified (cysteine sulfenic acid (-SOH)). Residues 365 to 419 form a required for interaction with TBP and formation of a ternary complex with DNA and TBP region; that stretch reads SPKRICPVPPVSTVTGDENISDSEIEQYLRTPQEVRDFQRAQAARQAATSVPNPP.

It belongs to the TFIIB family. As to quaternary structure, component of TFIIIB complexes. The TFIIIB complex has two activities, alpha and beta. The TFIIIB-alpha activity complex is composed of TBP, BDP1, and a complex containing both BRF2 and at least four stably associated proteins; this complex inhibits the transcription by pol III via its phosphorylation by CK2; YY1 facilitates the TFIIIB-alpha complex formation. Interacts with TBP; this interaction promotes recruitment of BRF2 to TATA box-containing promoters. Interacts with TBP and the BURE sequence (GC-rich sequence downstream from the TATA box) to form a strong ternary complex which is joined by BDP1; this ternary complex stimulates pol III transcription. Forms a trimeric complex composed of TBP, BRF2 and mini-SNAPc complex (SNAP43, SNAP50, and the N-terminal third of SNAP190) on the promoter. Assembly of the TBP-BRF2 complex is stimulated by SNAP190. Interacts with MAF1 and SNAPC4. Post-translationally, in response to oxidative stress, Cys-361 is reversibly oxidized to cysteine sulfenic acid. Oxidation of Cys-361 impairs formation of a ternary complex with TBP and DNA and down-regulates expression of target genes in response to oxidative stress.

The protein resides in the nucleus. Functionally, general activator of RNA polymerase III transcription. Factor exclusively required for RNA polymerase III transcription of genes with promoter elements upstream of the initiation sites. Contributes to the regulation of gene expression; functions as activator in the absence of oxidative stress. Down-regulates expression of target genes in response to oxidative stress. Overexpression protects cells against apoptosis in response to oxidative stress. This is Transcription factor IIIB 50 kDa subunit (BRF2) from Homo sapiens (Human).